The sequence spans 291 residues: 33 kDa chaperonin (291 aa).

2 disulfide bridges follow: Cys237-Cys239 and Cys270-Cys273.

The protein belongs to the HSP33 family. Post-translationally, under oxidizing conditions two disulfide bonds are formed involving the reactive cysteines. Under reducing conditions zinc is bound to the reactive cysteines and the protein is inactive.

The protein localises to the cytoplasm. Redox regulated molecular chaperone. Protects both thermally unfolding and oxidatively damaged proteins from irreversible aggregation. Plays an important role in the bacterial defense system toward oxidative stress. The chain is 33 kDa chaperonin from Bacillus cytotoxicus (strain DSM 22905 / CIP 110041 / 391-98 / NVH 391-98).